Consider the following 431-residue polypeptide: Glucose-1-phosphate adenylyltransferase (431 aa).

Residue lysine 39 participates in beta-D-fructose 1,6-bisphosphate binding. Residues arginine 40, histidine 46, and arginine 52 each coordinate AMP. Tyrosine 114 is a binding site for alpha-D-glucose 1-phosphate. Arginine 130 is an AMP binding site. Residues glycine 179, 194-195 (EK), and serine 212 each bind alpha-D-glucose 1-phosphate. AMP-binding residues include glutamate 370 and arginine 386. Beta-D-fructose 1,6-bisphosphate-binding positions include 419–423 (REMLR) and 429–431 (QER).

Belongs to the bacterial/plant glucose-1-phosphate adenylyltransferase family. Homotetramer.

The catalysed reaction is alpha-D-glucose 1-phosphate + ATP + H(+) = ADP-alpha-D-glucose + diphosphate. It functions in the pathway glycan biosynthesis; glycogen biosynthesis. With respect to regulation, allosterically activated by fructose-1,6-bisphosphate (F16BP) and inhibited by AMP. Its function is as follows. Involved in the biosynthesis of ADP-glucose, a building block required for the elongation reactions to produce glycogen. Catalyzes the reaction between ATP and alpha-D-glucose 1-phosphate (G1P) to produce pyrophosphate and ADP-Glc. The sequence is that of Glucose-1-phosphate adenylyltransferase from Salmonella paratyphi C (strain RKS4594).